Here is a 59-residue protein sequence, read N- to C-terminus: Large ribosomal subunit protein uL30 (59 aa).

It belongs to the universal ribosomal protein uL30 family. Part of the 50S ribosomal subunit.

The chain is Large ribosomal subunit protein uL30 from Listeria welshimeri serovar 6b (strain ATCC 35897 / DSM 20650 / CCUG 15529 / CIP 8149 / NCTC 11857 / SLCC 5334 / V8).